Here is a 146-residue protein sequence, read N- to C-terminus: Probable glycine cleavage system H protein 3 (146 aa).

Residues 29 to 111 (VVSVGMTDLG…PYGSWIIKVS (83 aa)) form the Lipoyl-binding domain. Lysine 71 carries the N6-lipoyllysine modification.

This sequence belongs to the GcvH family. In terms of assembly, the glycine cleavage system is composed of four proteins: P, T, L and H. The cofactor is (R)-lipoate.

The glycine cleavage system catalyzes the degradation of glycine. The H protein shuttles the methylamine group of glycine from the P protein to the T protein. The sequence is that of Probable glycine cleavage system H protein 3 from Sulfolobus acidocaldarius (strain ATCC 33909 / DSM 639 / JCM 8929 / NBRC 15157 / NCIMB 11770).